We begin with the raw amino-acid sequence, 349 residues long: Anthranilate phosphoribosyltransferase (349 aa).

Residues Gly82, 85–86 (GD), 92–95 (NVST), 110–118 (KHGNRAVSG), and Ser122 contribute to the 5-phospho-alpha-D-ribose 1-diphosphate site. Gly82 contributes to the anthranilate binding site. Position 94 (Ser94) interacts with Mg(2+). Asn113 serves as a coordination point for anthranilate. Arg168 is an anthranilate binding site. Residues Asp227 and Glu228 each contribute to the Mg(2+) site.

It belongs to the anthranilate phosphoribosyltransferase family. Homodimer. The cofactor is Mg(2+).

It catalyses the reaction N-(5-phospho-beta-D-ribosyl)anthranilate + diphosphate = 5-phospho-alpha-D-ribose 1-diphosphate + anthranilate. It functions in the pathway amino-acid biosynthesis; L-tryptophan biosynthesis; L-tryptophan from chorismate: step 2/5. In terms of biological role, catalyzes the transfer of the phosphoribosyl group of 5-phosphorylribose-1-pyrophosphate (PRPP) to anthranilate to yield N-(5'-phosphoribosyl)-anthranilate (PRA). The sequence is that of Anthranilate phosphoribosyltransferase from Pseudomonas putida (Arthrobacter siderocapsulatus).